The following is a 96-amino-acid chain: Putative defensin-like protein 263 (96 aa).

The N-terminal stretch at 1 to 26 (MEKTSLKLVFLFSLTVIALCLSLSAA) is a signal peptide. 4 disulfide bridges follow: Cys48-Cys96, Cys67-Cys86, Cys73-Cys91, and Cys77-Cys93.

Belongs to the DEFL family.

Its subcellular location is the secreted. This is Putative defensin-like protein 263 from Arabidopsis thaliana (Mouse-ear cress).